Here is a 93-residue protein sequence, read N- to C-terminus: Small ribosomal subunit protein uS19 (93 aa).

Belongs to the universal ribosomal protein uS19 family.

Functionally, protein S19 forms a complex with S13 that binds strongly to the 16S ribosomal RNA. The polypeptide is Small ribosomal subunit protein uS19 (Blochmanniella floridana).